The chain runs to 805 residues: Acetyl-CoA decarbonylase/synthase complex subunit alpha 3 (805 aa).

Residues Cys-72, Cys-75, Cys-76, Cys-78, Cys-83, and Cys-93 each contribute to the [4Fe-4S] cluster site. Position 116 (His-116) interacts with CO. Residues His-249, Cys-277, and Cys-322 each coordinate [Ni-4Fe-4S] cluster. 4Fe-4S ferredoxin-type domains follow at residues 407–435 and 445–474; these read EEFK…IPEA and EYLE…LNVL. [4Fe-4S] cluster is bound by residues Cys-416, Cys-419, Cys-422, Cys-426, Cys-454, Cys-457, Cys-460, and Cys-464. Residues Cys-522, Cys-551, and Cys-586 each contribute to the [Ni-4Fe-4S] cluster site.

This sequence belongs to the Ni-containing carbon monoxide dehydrogenase family. In terms of assembly, heterotetramer of two alpha and two epsilon subunits. The ACDS complex is made up of alpha, epsilon, beta, gamma and delta subunits with a probable stoichiometry of (alpha(2)epsilon(2))(4)-beta(8)-(gamma(1)delta(1))(8). It depends on [4Fe-4S] cluster as a cofactor. Requires [Ni-4Fe-4S] cluster as cofactor.

The catalysed reaction is CO + 2 oxidized [2Fe-2S]-[ferredoxin] + H2O = 2 reduced [2Fe-2S]-[ferredoxin] + CO2 + 2 H(+). It functions in the pathway one-carbon metabolism; methanogenesis from acetate. Part of the ACDS complex that catalyzes the reversible cleavage of acetyl-CoA, allowing growth on acetate as sole source of carbon and energy. The alpha-epsilon subcomponent functions as a carbon monoxide dehydrogenase. This Methanosarcina acetivorans (strain ATCC 35395 / DSM 2834 / JCM 12185 / C2A) protein is Acetyl-CoA decarbonylase/synthase complex subunit alpha 3.